We begin with the raw amino-acid sequence, 1352 residues long: Ubiquitin carboxyl-terminal hydrolase 31 (1352 aa).

Residues 1-16 (MSKVTAPGSGPPAAAS) show a composition bias toward low complexity. Disordered stretches follow at residues 1 to 62 (MSKV…RSVG) and 79 to 119 (SSEG…PPAC). Over residues 32-43 (RAGGGGAGGPGA) the composition is skewed to gly residues. Positions 44 to 62 (SGPAAPSSPSSPSSARSVG) are enriched in low complexity. Pro residues predominate over residues 95–117 (PPGPAAAPTPPPCPPPPASPAPP). The region spanning 128–765 (AGLRNHGNTC…TAYILFYQRR (638 aa)) is the USP domain. Residue Cys137 is the Nucleophile of the active site. Residues 162–185 (RAGRPEPSPDPEQPAGRGAQGQGE) are disordered. Catalysis depends on His723, which acts as the Proton acceptor. Disordered stretches follow at residues 812–835 (LASL…FSTR), 919–939 (SSSY…AVGR), and 951–1352 (DESD…QKPQ). The segment covering 958–970 (LNSSVVDTQSKHS) has biased composition (polar residues). Low complexity-rich tracts occupy residues 992–1001 (VDQSDSVDSS), 1051–1070 (SSLS…SLKP), 1078–1089 (DSSSRGSGRHSS), and 1101–1138 (PKSQ…GPAT). The span at 1148–1159 (RTSDHSLSREGS) shows a compositional bias: basic and acidic residues. Over residues 1160 to 1181 (RQSLGSDRASATSTSKPNSPRV) the composition is skewed to polar residues. Residues 1198-1210 (SSSMASLRSPSTS) are compositionally biased toward low complexity. Composition is skewed to basic and acidic residues over residues 1215 to 1225 (LKRDSKSEDKG) and 1234 to 1243 (RQKETRRSTD). Over residues 1251–1264 (SKKAGGSSVKSVCK) the composition is skewed to low complexity. The residue at position 1264 (Lys1264) is an N6-acetyllysine. 2 stretches are compositionally biased toward polar residues: residues 1278–1290 (PASQ…TTGK) and 1341–1352 (MQTSARPSQKPQ).

The protein belongs to the peptidase C19 family. In terms of processing, acetylated at Lys-1264. Acetylation decreases activity. Deacetylated by SIRT1. In terms of tissue distribution, widely expressed.

It catalyses the reaction Thiol-dependent hydrolysis of ester, thioester, amide, peptide and isopeptide bonds formed by the C-terminal Gly of ubiquitin (a 76-residue protein attached to proteins as an intracellular targeting signal).. Its function is as follows. Deubiquitinase that recognizes and hydrolyzes the peptide bond at the C-terminal Gly of ubiquitin. May play a role in the regulation of NF-kappa-B signaling pathway by deubiquitinating TRAF2. In terms of biological role, (Microbial infection) Plays a positive role in foot-and-mouth disease and classical swine fever viral infection. Mechanistically, associates with internal ribosomal entry site (IRES) element within the 5'-untranslated region of viral genomes to promote translation of the virus-encoded polyprotein. The sequence is that of Ubiquitin carboxyl-terminal hydrolase 31 (USP31) from Homo sapiens (Human).